A 407-amino-acid chain; its full sequence is Imidazolonepropionase (407 aa).

The Fe(3+) site is built by H72 and H74. Zn(2+) is bound by residues H72 and H74. 4-imidazolone-5-propanoate-binding residues include R81, Y144, and H177. Y144 lines the N-formimidoyl-L-glutamate pocket. H242 is a Fe(3+) binding site. H242 lines the Zn(2+) pocket. Q245 lines the 4-imidazolone-5-propanoate pocket. A Fe(3+)-binding site is contributed by D317. Residue D317 coordinates Zn(2+). 2 residues coordinate N-formimidoyl-L-glutamate: N319 and G321. T322 lines the 4-imidazolone-5-propanoate pocket.

The protein belongs to the metallo-dependent hydrolases superfamily. HutI family. Requires Zn(2+) as cofactor. It depends on Fe(3+) as a cofactor.

The protein localises to the cytoplasm. It catalyses the reaction 4-imidazolone-5-propanoate + H2O = N-formimidoyl-L-glutamate. It functions in the pathway amino-acid degradation; L-histidine degradation into L-glutamate; N-formimidoyl-L-glutamate from L-histidine: step 3/3. Functionally, catalyzes the hydrolytic cleavage of the carbon-nitrogen bond in imidazolone-5-propanoate to yield N-formimidoyl-L-glutamate. It is the third step in the universal histidine degradation pathway. In Aliivibrio salmonicida (strain LFI1238) (Vibrio salmonicida (strain LFI1238)), this protein is Imidazolonepropionase.